The following is a 326-amino-acid chain: Probable cell division protein WhiA (326 aa).

The segment at residues 275–308 (SLEELGQLADPPLTKDAIAGRIRRLLAMADKRAA) is a DNA-binding region (H-T-H motif).

The protein belongs to the WhiA family.

Involved in cell division and chromosome segregation. In Thermobifida fusca (strain YX), this protein is Probable cell division protein WhiA.